We begin with the raw amino-acid sequence, 272 residues long: 4-diphosphocytidyl-2-C-methyl-D-erythritol kinase (272 aa).

The active site involves Lys-14. 92-102 (PMGGGLGGGSS) serves as a coordination point for ATP. Asp-132 is an active-site residue.

Belongs to the GHMP kinase family. IspE subfamily.

The catalysed reaction is 4-CDP-2-C-methyl-D-erythritol + ATP = 4-CDP-2-C-methyl-D-erythritol 2-phosphate + ADP + H(+). It participates in isoprenoid biosynthesis; isopentenyl diphosphate biosynthesis via DXP pathway; isopentenyl diphosphate from 1-deoxy-D-xylulose 5-phosphate: step 3/6. Its function is as follows. Catalyzes the phosphorylation of the position 2 hydroxy group of 4-diphosphocytidyl-2C-methyl-D-erythritol. In Fervidobacterium nodosum (strain ATCC 35602 / DSM 5306 / Rt17-B1), this protein is 4-diphosphocytidyl-2-C-methyl-D-erythritol kinase.